Here is a 518-residue protein sequence, read N- to C-terminus: Sensor protein kinase HptS (518 aa).

2 consecutive transmembrane segments (helical) span residues Ile20–Trp40 and Gly222–Ile242. Positions Glu297 to Arg513 constitute a Histidine kinase domain. His325 carries the phosphohistidine; by autocatalysis modification.

In terms of processing, autophosphorylated.

The protein resides in the cell membrane. The enzyme catalyses ATP + protein L-histidine = ADP + protein N-phospho-L-histidine.. Its function is as follows. Member of the two-component regulatory system HptS/HptR that regulates genes involved in hexose phosphate transport system in response to changes in extracellular phosphate sources. May act as a sensor protein kinase which is autophosphorylated at a histidine residue and transfers its phosphate group to the conserved aspartic acid residue in the regulatory domain of HptS. In turn, HptS antagonizes CcpA-dependent transcription of a subset of CcpA-regulated genes involved in antibiotic susceptibility. In Staphylococcus aureus (strain USA300), this protein is Sensor protein kinase HptS (hptS).